The chain runs to 171 residues: Adenine phosphoribosyltransferase (171 aa).

It belongs to the purine/pyrimidine phosphoribosyltransferase family. Homodimer.

The protein resides in the cytoplasm. The catalysed reaction is AMP + diphosphate = 5-phospho-alpha-D-ribose 1-diphosphate + adenine. Its pathway is purine metabolism; AMP biosynthesis via salvage pathway; AMP from adenine: step 1/1. Its function is as follows. Catalyzes a salvage reaction resulting in the formation of AMP, that is energically less costly than de novo synthesis. This is Adenine phosphoribosyltransferase (apt) from Prochlorococcus marinus subsp. pastoris (strain CCMP1986 / NIES-2087 / MED4).